We begin with the raw amino-acid sequence, 284 residues long: Formamidopyrimidine-DNA glycosylase (284 aa).

The active-site Schiff-base intermediate with DNA is Pro2. Glu3 acts as the Proton donor in catalysis. Lys61 serves as the catalytic Proton donor; for beta-elimination activity. 3 residues coordinate DNA: His95, Arg115, and Arg157. An FPG-type zinc finger spans residues 243–277; sequence AVYGRAGQPCRRCGTAIVREPFMNRSSFRCPACQP. Catalysis depends on Arg267, which acts as the Proton donor; for delta-elimination activity.

This sequence belongs to the FPG family. As to quaternary structure, monomer. The cofactor is Zn(2+).

The catalysed reaction is Hydrolysis of DNA containing ring-opened 7-methylguanine residues, releasing 2,6-diamino-4-hydroxy-5-(N-methyl)formamidopyrimidine.. The enzyme catalyses 2'-deoxyribonucleotide-(2'-deoxyribose 5'-phosphate)-2'-deoxyribonucleotide-DNA = a 3'-end 2'-deoxyribonucleotide-(2,3-dehydro-2,3-deoxyribose 5'-phosphate)-DNA + a 5'-end 5'-phospho-2'-deoxyribonucleoside-DNA + H(+). Its function is as follows. Involved in base excision repair of DNA damaged by oxidation or by mutagenic agents. Acts as a DNA glycosylase that recognizes and removes damaged bases. Has a preference for oxidized purines, such as 7,8-dihydro-8-oxoguanine (8-oxoG). Has AP (apurinic/apyrimidinic) lyase activity and introduces nicks in the DNA strand. Cleaves the DNA backbone by beta-delta elimination to generate a single-strand break at the site of the removed base with both 3'- and 5'-phosphates. This is Formamidopyrimidine-DNA glycosylase from Acidothermus cellulolyticus (strain ATCC 43068 / DSM 8971 / 11B).